Reading from the N-terminus, the 81-residue chain is MAFLKKSLLLVLFLGLVSLSICEEEKRENEDEEEQEDDEQSEMKRGMWSKIKEAGKAAAKAAAKAAGKAALDVVSGAIGEQ.

A signal peptide spans 1-22 (MAFLKKSLLLVLFLGLVSLSIC). A propeptide spanning residues 23–43 (EEEKRENEDEEEQEDDEQSEM) is cleaved from the precursor. Residues 24–46 (EEKRENEDEEEQEDDEQSEMKRG) form a disordered region. The span at 30-40 (EDEEEQEDDEQ) shows a compositional bias: acidic residues. Isoleucine 78 carries the isoleucine amide modification. Residues 79 to 81 (GEQ) constitute a propeptide that is removed on maturation.

Expressed by the skin glands.

The protein resides in the secreted. In terms of biological role, has antibacterial activity against Gram-positive bacterium M.luteus NCT C2665 and against Gram-negative bacterium E.coli K12D31. This chain is Adenoregulin-related peptide, found in Agalychnis callidryas (Red-eyed tree frog).